The chain runs to 239 residues: Leucine-rich repeat-containing protein 57 (239 aa).

The N-myristoyl glycine moiety is linked to residue Gly-2. LRR repeat units lie at residues 39–60, 63–85, 86–107, 109–130, 132–153, 154–175, 177–197, and 202–222; these read NLRTIDLSNNKIDSLPPLIIGK, LLKSLSLNNNKLTVLPDELCNLK, KLETLSLNNNHLRELPSTFGQL, ALKTLSLSGNQLGALPPQLCCL, HLDVVDLSKNQIRSIPDTVGEL, QAIELNLNQNQISQLSVKISCC, RLKVLRLEENCLELSMLPQSI, and QICLLAVEGNLFEIKKFRELE.

It is found in the membrane. The chain is Leucine-rich repeat-containing protein 57 (Lrrc57) from Mus musculus (Mouse).